Consider the following 300-residue polypeptide: Recombination-promoting nuclease RpnC (300 aa).

The protein belongs to the Rpn/YhgA-like nuclease family.

Functionally, a low activity DNA endonuclease yielding 3'-hydroxyl ends. Upon expression enhances RecA-independent DNA recombination 2.9-fold, concomitantly reducing viability by 59% and inducing DNA damage as measured by induction of the SOS repair response. The chain is Recombination-promoting nuclease RpnC from Escherichia coli (strain K12).